The primary structure comprises 483 residues: MARASSTKARKQRHDPLLKDLDAAQGTLKKINKKKLAQNDAANHDAANEEDGYIDSKASRKILQLAKEQQDEIEGEELAESERNKQFEARFTTMSYDDEDEDEDEDEEAFGEDISDFEPEGDYKEEEEIVEIDEEDAAMFEQYFKKSDDFNSLSGSYNLADKIMASIREKESQVEDMQDDEPLANEQNTSRGNISSGLKSGEGVALPEKVIKAYTTVGSILKTWTHGKLPKLFKVIPSLRNWQDVIYVTNPEEWSPHVVYEATKLFVSNLTAKESQKFINLILLERFRDNIETSEDHSLNYHIYRAVKKSLYKPSAFFKGFLFPLVETGCNVREATIAGSVLAKVSVPALHSSAALSYLLRLPFSPPTTVFIKILLDKKYALPYQTVDDCVYYFMRFRILDDGSNGEDATRVLPVIWHKAFLTFAQRYKNDITQDQRDFLLETVRQRGHKDIGPEIRRELLAGASREFVDPQEANDDLMIDVN.

4 disordered regions span residues 1-21 (MARA…LKDL), 33-55 (KKKL…GYID), 67-123 (KEQQ…EGDY), and 171-200 (ESQV…GLKS). Acidic residues predominate over residues 96 to 123 (YDDEDEDEDEDEEAFGEDISDFEPEGDY). A Phosphoserine; by ATM or ATR modification is found at Ser-172. The span at 174-183 (VEDMQDDEPL) shows a compositional bias: acidic residues. Positions 185-198 (NEQNTSRGNISSGL) are enriched in polar residues. 2 positions are modified to phosphoserine: Ser-190 and Ser-404.

This sequence belongs to the bystin family.

It localises to the cytoplasm. Its subcellular location is the nucleus. The protein localises to the nucleolus. In terms of biological role, required for normal export of the pre-40S particles from the nucleus to the cytoplasm. Its subcellular location and association with pre-40S subunit shifts from mixed cytoplasm/nucleus to all nuclear in RPS19 disruptions, suggesting it acts after the ribosomal protein. The polypeptide is Essential nuclear protein 1 (ENP1) (Saccharomyces cerevisiae (strain ATCC 204508 / S288c) (Baker's yeast)).